Here is a 481-residue protein sequence, read N- to C-terminus: Leukocyte immunoglobulin-like receptor subfamily A member 6 (481 aa).

The signal sequence occupies residues Met1–Ala23. Residues Gly24–Thr118 enclose the Ig-like C2-type 1 domain. The Extracellular portion of the chain corresponds to Gly24–Asn447. Cys49 and Cys98 are joined by a disulfide. N-linked (GlcNAc...) asparagine glycosylation occurs at Asn139. 2 disulfides stabilise this stretch: Cys144-Cys196 and Cys245-Cys296. 2 consecutive Ig-like C2-type domains span residues Pro225 to Asn314 and Asp323 to Ser408. 2 N-linked (GlcNAc...) asparagine glycosylation sites follow: Asn301 and Asn340. Cysteines 345 and 396 form a disulfide. Positions Val418–His439 are disordered. Pro residues predominate over residues Ser426–Thr435. Residues Leu448–Ala468 form a helical membrane-spanning segment. The Cytoplasmic portion of the chain corresponds to Gln469 to Arg481.

Its subcellular location is the membrane. May act as receptor for class I MHC antigens. The protein is Leukocyte immunoglobulin-like receptor subfamily A member 6 (LILRA6) of Pan troglodytes (Chimpanzee).